Here is a 355-residue protein sequence, read N- to C-terminus: MIGKLKQNLLVACLVISSVTVFYLCRHAMDCHHRIEERSQPLLSSLHATLRTGQNLSTPFIYNKDMPLIFIGGVPRSGTTLMRAMLDAHPDVRCGEETRVIPRILAMKQMWSRSGREKMRLDEAGVTDEVLDSAMQAFLLEIIVKHGEPANYLCNKDPFALKSLTYLAKIFPHAKFILMVRDGRASVHSMISRKVTIAGFDLSSYRDCLTKWNRAIETMYTQCLEAADKCLPVHYEQLVLHPEKWMRTLLRFLNIPWNDAVLHHEELIGKAGGVSLSKVERSTDQVIKPVNVEALSKWVGKIPLDVQRDMAVIAPMLARLGYDPHANPPNYGRPDPLVLDNTRRLQKSPEKPNPS.

Residues 1-8 are Cytoplasmic-facing; the sequence is MIGKLKQN. A helical; Signal-anchor for type II membrane protein membrane pass occupies residues 9-25; sequence LLVACLVISSVTVFYLC. Over 26–355 the chain is Lumenal; the sequence is RHAMDCHHRI…QKSPEKPNPS (330 aa). A glycan (N-linked (GlcNAc...) asparagine) is linked at N55. 76–80 lines the 3'-phosphoadenylyl sulfate pocket; it reads RSGTT. C94 and C154 are oxidised to a cystine. The Proton donor/acceptor role is filled by E97. The tract at residues 99 to 103 is interaction with peptide substrate; that stretch reads RVIPR. The 3'-phosphoadenylyl sulfate site is built by R181, S189, and R193. An intrachain disulfide couples C223 to C230. 3'-phosphoadenylyl sulfate contacts are provided by residues Y235, 282 to 291, and K297; that span reads STDQVIKPVN. The interval 325–355 is disordered; the sequence is HANPPNYGRPDPLVLDNTRRLQKSPEKPNPS. The span at 341–355 shows a compositional bias: basic and acidic residues; sequence NTRRLQKSPEKPNPS.

This sequence belongs to the protein sulfotransferase family.

It is found in the golgi apparatus membrane. It carries out the reaction L-tyrosyl-[protein] + 3'-phosphoadenylyl sulfate = O-sulfo-L-tyrosine-[protein] + adenosine 3',5'-bisphosphate + H(+). Functionally, catalyzes the O-sulfation of tyrosine residues within acidic motifs of polypeptides, using 3'-phosphoadenylyl sulfate (PAPS) as cosubstrate. In Danio rerio (Zebrafish), this protein is Protein-tyrosine sulfotransferase 1 (tpst1).